The sequence spans 374 residues: tRNA-specific 2-thiouridylase MnmA (374 aa).

Residues 15–22 (GMSGGVDS) and Met41 each bind ATP. The segment at 101-103 (NPD) is interaction with target base in tRNA. Cys106 serves as the catalytic Nucleophile. A disulfide bridge links Cys106 with Cys206. Gly130 contributes to the ATP binding site. Positions 156-158 (KDQ) are interaction with tRNA. Residue Cys206 is the Cysteine persulfide intermediate of the active site. The segment at 324-325 (RY) is interaction with tRNA.

It belongs to the MnmA/TRMU family.

It localises to the cytoplasm. It catalyses the reaction S-sulfanyl-L-cysteinyl-[protein] + uridine(34) in tRNA + AH2 + ATP = 2-thiouridine(34) in tRNA + L-cysteinyl-[protein] + A + AMP + diphosphate + H(+). In terms of biological role, catalyzes the 2-thiolation of uridine at the wobble position (U34) of tRNA, leading to the formation of s(2)U34. The protein is tRNA-specific 2-thiouridylase MnmA of Aromatoleum aromaticum (strain DSM 19018 / LMG 30748 / EbN1) (Azoarcus sp. (strain EbN1)).